The sequence spans 88 residues: Small ribosomal subunit protein bS20 (88 aa).

Positions 1–20 are disordered; sequence MANTAQARKRARQAVVQNAH.

It belongs to the bacterial ribosomal protein bS20 family.

In terms of biological role, binds directly to 16S ribosomal RNA. The polypeptide is Small ribosomal subunit protein bS20 (Ralstonia nicotianae (strain ATCC BAA-1114 / GMI1000) (Ralstonia solanacearum)).